Consider the following 509-residue polypeptide: Maturase K (509 aa).

This sequence belongs to the intron maturase 2 family. MatK subfamily.

The protein resides in the plastid. It is found in the chloroplast. In terms of biological role, usually encoded in the trnK tRNA gene intron. Probably assists in splicing its own and other chloroplast group II introns. The polypeptide is Maturase K (Chamaecyparis obtusa (Hinoki false-cypress)).